A 1544-amino-acid polypeptide reads, in one-letter code: GATOR complex protein Iml1 (1544 aa).

Disordered regions lie at residues 615-649 (QAVP…CENG) and 1037-1072 (RRHS…EKRP). Polar residues-rich tracts occupy residues 623–639 (QAGQ…NNNN) and 1041–1057 (TSII…TNSP). Residues 1058–1072 (FRERVGSNRLPEKRP) show a composition bias toward basic and acidic residues.

This sequence belongs to the IML1 family. In terms of assembly, component of the GATOR complex consisting of mio, Nup44A/Seh1, Im11, Nplr3, Nplr2, Wdr24, Wdr59 and Sec13. Within the GATOR complex, probable component of the GATOR1 subcomplex which is likely composed of Iml1, Nplr2 and Nplr3.

Functionally, an essential component of the GATOR subcomplex GATOR1 which functions as an inhibitor of the amino acid-sensing branch of the TORC1 signaling pathway. The two GATOR subcomplexes, GATOR1 and GATOR2, regulate the TORC1 pathway in order to mediate metabolic homeostasis, female gametogenesis and the response to amino acid limitation and complete starvation. The function of GATOR1 in negatively regulating the TORC1 pathway is essential for maintaining baseline levels of TORC1 activity under nutrient rich conditions, and for promoting survival during amino acid or complete starvation by inhibiting TORC1-dependent cell growth and promoting catabolic metabolism and autophagy. GATOR1 and GATOR2 act at different stages of oogenesis to regulate TORC1 in order to control meiotic entry and promote oocyte growth and development. After exactly four mitotic cyst divisions, the GATOR1 complex members (Iml1, Nprl2 and Nprl3) down-regulate TORC1 to slow cellular metabolism and promote the mitotic/meiotic transition. At later stages of oogenesis, the mio and Nup44A components of the GATOR2 complex inhibit GATOR1 and thus activate TORC1 to promote meiotic progression, and drive oocyte growth and development. This Drosophila melanogaster (Fruit fly) protein is GATOR complex protein Iml1.